A 451-amino-acid chain; its full sequence is MEQWDHFHNQQEDTDSCSESVKFDARSMTALLPPNPKNSPSLQEKLKSFKAALIALYLLVFAVLIPLIGIVAAQLLKWETKNCSVSSTNANDITQSLTGKGNDSEEEMRFQEVFMEHMSNMEKRIQHILDMEANLMDTEHFQNFSMTTDQRFNDILLQLSTLFSSVQGHGNAIDEISKSLISLNTTLLDLQLNIENLNGKIQENTFKQQEEISKLEERVYNVSAEIMAMKEEQVHLEQEIKGEVKVLNNITNDLRLKDWEHSQTLRNITLIQGPPGPPGEKGDRGPTGESGPRGFPGPIGPPGLKGDRGAIGFPGSRGLPGYAGRPGNSGPKGQKGEKGSGNTLTPFTKVRLVGGSGPHEGRVEILHSGQWGTICDDRWEVRVGQVVCRSLGYPGVQAVHKAAHFGQGTGPIWLNEVFCFGRESSIEECKIRQWGTRACSHSEDAGVTCTL.

Residues 1–50 (MEQWDHFHNQQEDTDSCSESVKFDARSMTALLPPNPKNSPSLQEKLKSFK) lie on the Cytoplasmic side of the membrane. Phosphoserine is present on Ser-27. The chain crosses the membrane as a helical; Signal-anchor for type II membrane protein span at residues 51-76 (AALIALYLLVFAVLIPLIGIVAAQLL). The spacer stretch occupies residues 77 to 109 (KWETKNCSVSSTNANDITQSLTGKGNDSEEEMR). Residues 77–451 (KWETKNCSVS…SEDAGVTCTL (375 aa)) lie on the Extracellular side of the membrane. Asn-82, Asn-102, Asn-143, Asn-184, Asn-221, Asn-249, and Asn-267 each carry an N-linked (GlcNAc...) asparagine glycan. The stretch at 171-255 (NAIDEISKSL…VLNNITNDLR (85 aa)) forms a coiled coil. The tract at residues 267-346 (NITLIQGPPG…EKGSGNTLTP (80 aa)) is disordered. Residues 273-341 (GPPGPPGEKG…KGQKGEKGSG (69 aa)) enclose the Collagen-like domain. The SRCR domain maps to 350–450 (VRLVGGSGPH…HSEDAGVTCT (101 aa)). 3 cysteine pairs are disulfide-bonded: Cys-375–Cys-439, Cys-388–Cys-449, and Cys-419–Cys-429.

As to quaternary structure, homotrimer. Interacts with MYO18A. Isoform I, isoform II and isoform III are expressed in monocyte-derived macrophages. Isoform I and isoform II are expressed in the liver, placenta and brain.

Its subcellular location is the membrane. Membrane glycoproteins implicated in the pathologic deposition of cholesterol in arterial walls during atherogenesis. Two types of receptor subunits exist. These receptors mediate the endocytosis of a diverse group of macromolecules, including modified low density lipoproteins (LDL). Isoform III does not internalize acetylated LDL. This chain is Macrophage scavenger receptor types I and II (MSR1), found in Homo sapiens (Human).